The primary structure comprises 493 residues: Glycerol kinase (493 aa).

T11 provides a ligand contact to ADP. The ATP site is built by T11, T12, and S13. T11 serves as a coordination point for sn-glycerol 3-phosphate. Position 15 (R15) interacts with ADP. Residues R80, E81, Y132, and D241 each contribute to the sn-glycerol 3-phosphate site. Residues R80, E81, Y132, D241, and Q242 each coordinate glycerol. ADP contacts are provided by T263 and G306. Positions 263, 306, 310, and 408 each coordinate ATP. G408 lines the ADP pocket.

It belongs to the FGGY kinase family.

The enzyme catalyses glycerol + ATP = sn-glycerol 3-phosphate + ADP + H(+). The protein operates within polyol metabolism; glycerol degradation via glycerol kinase pathway; sn-glycerol 3-phosphate from glycerol: step 1/1. With respect to regulation, inhibited by fructose 1,6-bisphosphate (FBP). Key enzyme in the regulation of glycerol uptake and metabolism. Catalyzes the phosphorylation of glycerol to yield sn-glycerol 3-phosphate. The polypeptide is Glycerol kinase (Cereibacter sphaeroides (strain ATCC 17025 / ATH 2.4.3) (Rhodobacter sphaeroides)).